Consider the following 119-residue polypeptide: Large ribosomal subunit protein uL18 (119 aa).

It belongs to the universal ribosomal protein uL18 family. In terms of assembly, part of the 50S ribosomal subunit; part of the 5S rRNA/L5/L18/L25 subcomplex. Contacts the 5S and 23S rRNAs.

In terms of biological role, this is one of the proteins that bind and probably mediate the attachment of the 5S RNA into the large ribosomal subunit, where it forms part of the central protuberance. The sequence is that of Large ribosomal subunit protein uL18 from Solibacter usitatus (strain Ellin6076).